Here is a 137-residue protein sequence, read N- to C-terminus: 6,7-dimethyl-8-ribityllumazine synthase (137 aa).

5-amino-6-(D-ribitylamino)uracil is bound by residues Phe-11, 43–45 (SFD), and 67–69 (CVI). 72–73 (DT) provides a ligand contact to (2S)-2-hydroxy-3-oxobutyl phosphate. The active-site Proton donor is the His-75. Residue Leu-100 participates in 5-amino-6-(D-ribitylamino)uracil binding. Arg-115 provides a ligand contact to (2S)-2-hydroxy-3-oxobutyl phosphate.

Belongs to the DMRL synthase family. As to quaternary structure, forms an icosahedral capsid composed of 60 subunits, arranged as a dodecamer of pentamers.

The catalysed reaction is (2S)-2-hydroxy-3-oxobutyl phosphate + 5-amino-6-(D-ribitylamino)uracil = 6,7-dimethyl-8-(1-D-ribityl)lumazine + phosphate + 2 H2O + H(+). Its pathway is cofactor biosynthesis; riboflavin biosynthesis; riboflavin from 2-hydroxy-3-oxobutyl phosphate and 5-amino-6-(D-ribitylamino)uracil: step 1/2. In terms of biological role, catalyzes the formation of 6,7-dimethyl-8-ribityllumazine by condensation of 5-amino-6-(D-ribitylamino)uracil with 3,4-dihydroxy-2-butanone 4-phosphate. This is the penultimate step in the biosynthesis of riboflavin. The sequence is that of 6,7-dimethyl-8-ribityllumazine synthase from Methanococcus maripaludis (strain DSM 14266 / JCM 13030 / NBRC 101832 / S2 / LL).